The following is a 467-amino-acid chain: MSLHLYNTLHRRVEPFEPLDPACPTMYVCGPTVYNYVHIGNARGPVVFGVLAALLRRRYGALRYARNITDVDDKINTAAQEQGVPISAITERFCAAYREDMKKLGVEPPDIEPEATAHMPQIIAMIEQLIERQHAYVAMEHVLFAVNSFADYGQLSRRDPEEMLAGARVEIAPYKRDPSDFVLWKPSSDQLPGWDSPWGRGRPGWHIECSAMAAAHLGETIDIHAGGIDLQFPHHENEIAQSRCAHGSSTFARVWMHNGMLNFEGAKMSKSLGNIETVHGLVAKHPPEALRYALLSAHYRKPLDWSEALIAQSVRTLNRLYGTLRDLAAYPAHPFIPGNIEAALDDDLNTPQALAELATLANEARIQLADTTHHAAAEVTAALTRLKAELLGAGLALGLLQQTPEAWFSQGTNESDETHIQALIDARGAAKQARDFVRADAIRAQLAAEGIVLEDTPHGVRWMKQHT.

Cys29 is a Zn(2+) binding site. A 'HIGH' region motif is present at residues 31–41 (PTVYNYVHIGN). The Zn(2+) site is built by Cys209, His234, and Glu238. The 'KMSKS' region motif lies at 267–271 (KMSKS). Lys270 contacts ATP.

Belongs to the class-I aminoacyl-tRNA synthetase family. As to quaternary structure, monomer. Zn(2+) is required as a cofactor.

The protein resides in the cytoplasm. The enzyme catalyses tRNA(Cys) + L-cysteine + ATP = L-cysteinyl-tRNA(Cys) + AMP + diphosphate. The protein is Cysteine--tRNA ligase of Xylella fastidiosa (strain 9a5c).